Reading from the N-terminus, the 222-residue chain is NAD(P)H-hydrate epimerase (222 aa).

Residues 9–209 form the YjeF N-terminal domain; it reads MQQIDSYTIE…DIGLRLPEDF (201 aa). 57–61 serves as a coordination point for (6S)-NADPHX; it reads NNGAD. Positions 58 and 119 each coordinate K(+). (6S)-NADPHX contacts are provided by residues 123–129 and D152; that span reads GVGLNNT. Position 155 (T155) interacts with K(+).

The protein belongs to the NnrE/AIBP family. The cofactor is K(+).

The enzyme catalyses (6R)-NADHX = (6S)-NADHX. The catalysed reaction is (6R)-NADPHX = (6S)-NADPHX. In terms of biological role, catalyzes the epimerization of the S- and R-forms of NAD(P)HX, a damaged form of NAD(P)H that is a result of enzymatic or heat-dependent hydration. This is a prerequisite for the S-specific NAD(P)H-hydrate dehydratase to allow the repair of both epimers of NAD(P)HX. The polypeptide is NAD(P)H-hydrate epimerase (Leuconostoc citreum (strain KM20)).